Here is a 141-residue protein sequence, read N- to C-terminus: Succinate dehydrogenase assembly factor 2, mitochondrial (141 aa).

The protein belongs to the SDHAF2 family. Interacts with the flavoprotein subunit within the SDH catalytic dimer.

The protein resides in the mitochondrion matrix. In terms of biological role, plays an essential role in the assembly of succinate dehydrogenase (SDH), an enzyme complex (also referred to as respiratory complex II) that is a component of both the tricarboxylic acid (TCA) cycle and the mitochondrial electron transport chain, and which couples the oxidation of succinate to fumarate with the reduction of ubiquinone (coenzyme Q) to ubiquinol. Required for flavinylation (covalent attachment of FAD) of the flavoprotein subunit of the SDH catalytic dimer. The chain is Succinate dehydrogenase assembly factor 2, mitochondrial from Dictyostelium discoideum (Social amoeba).